We begin with the raw amino-acid sequence, 770 residues long: Proprotein convertase subtilisin/kexin type 7 (770 aa).

Positions 1 to 36 (MPKGRQKVPHLDAHLGLPICLWLELAIFFLVPQVMG) are cleaved as a signal peptide. A propeptide spanning residues 37-140 (LSEAGGLDIL…EQTLLKRAKR (104 aa)) is cleaved from the precursor. Over 141–666 (SIHFNDPKYP…YTITPNTLKT (526 aa)) the chain is Extracellular. A Peptidase S8 domain is found at 152-472 (QWHLNNRRSP…FGLLNAWRLV (321 aa)). Residues asparagine 166 and asparagine 174 are each glycosylated (N-linked (GlcNAc...) asparagine). Aspartate 186 acts as the Charge relay system in catalysis. The tract at residues 195 to 228 (DIAPNYSPEGSYDLNSNDPDPMPHPDEENGNHHG) is disordered. Residues 215–225 (PMPHPDEENGN) show a composition bias toward basic and acidic residues. The active-site Charge relay system is histidine 227. Asparagine 240 is a glycosylation site (N-linked (GlcNAc...) asparagine). The active-site Charge relay system is the serine 405. Residues 480–617 (SVPYLASYVS…QLTLYGSMWS (138 aa)) enclose the P/Homo B domain. N-linked (GlcNAc...) asparagine glycosylation occurs at asparagine 510. The helical transmembrane segment at 667 to 687 (LVLVGCFSVFWTIYYMLEVCL) threads the bilayer. Residues 688 to 770 (SQRNKASTHG…LLQGKSGQIC (83 aa)) lie on the Cytoplasmic side of the membrane.

It belongs to the peptidase S8 family. Ca(2+) is required as a cofactor. In terms of tissue distribution, widely expressed. Expressed in brain, lung, muscle, heart, liver, kidney, spleen and thymus.

The protein localises to the golgi apparatus. It localises to the trans-Golgi network membrane. Its activity is regulated as follows. Inhibited by zinc and copper. Serine endoprotease that processes various proproteins by cleavage at paired basic amino acids, recognizing the RXXX[KR]R consensus motif. Likely functions in the constitutive secretory pathway. The polypeptide is Proprotein convertase subtilisin/kexin type 7 (Pcsk7) (Mus musculus (Mouse)).